The primary structure comprises 64 residues: Protein YnhH (64 aa).

This is Protein YnhH from Escherichia coli (strain K12).